The following is a 220-amino-acid chain: Photosynthetic NDH subunit of lumenal location 3, chloroplastic (220 aa).

A chloroplast-targeting transit peptide spans 1 to 35 (MAHFIDLNSLTNTLPSLPKLPESRKTGKSSGFACR). The transit peptide at 36-77 (RTEEFQEPDSVQITRRMTLGFAVSIGLTGILGENNVSLAQDN) directs the protein to the thylakoid.

It belongs to the PsbQ family. Part of the chloroplast NDH complex, composed of a mixture of chloroplast and nucleus encoded subunits. Component of the NDH lumenal subcomplex, at least composed of PnsL1, PnsL2, PnsL3, PnsL4 and PnsL5.

The protein localises to the plastid. It localises to the chloroplast thylakoid membrane. Its function is as follows. NDH shuttles electrons from NAD(P)H:plastoquinone, via FMN and iron-sulfur (Fe-S) centers, to quinones in the photosynthetic chain and possibly in a chloroplast respiratory chain. The immediate electron acceptor for the enzyme in this species is believed to be plastoquinone. Couples the redox reaction to proton translocation, and thus conserves the redox energy in a proton gradient. Required for both formation and activity of the chloroplast NAD(P)H dehydrogenase (NDH) complex. The chain is Photosynthetic NDH subunit of lumenal location 3, chloroplastic from Arabidopsis thaliana (Mouse-ear cress).